Reading from the N-terminus, the 404-residue chain is MDYSEIMVRHGELSTKGKNRMRFINKLKNNIQDVLAPFPAITVRSDRDRTHVYLNGTDYQPVVEALKLVFGVQALSPVYKLEKSVPLLVTAVQDIMTSLYRDGLTFKIATKRSDHAFELDSRELNSLLGGAVFEVLPNIQAQMKHPDVTLKVEIRDEAAYISYEEIKGAGGLPVGTSGKGMLMLSGGIDSPVAGYLALKRGLDIEVVHFASPPYTSPGALAKAQDLTRRLTRFGGNIQFIEVPFTEIQEEIKNKAPEAYLMTLTRRFMMRITDAIREQRKGLVIVNGESLGQVASQTLESMQAINAVTSTPIIRPVVTMDKLEIIEMAQAIDTFDISIQPFEDCCTIFAPDRPKTNPKLGNAEKYEERFDIDGLVQRAVSGIVVTEITPEIVNDEVENLIDALL.

Positions 60-165 (QPVVEALKLV…DEAAYISYEE (106 aa)) constitute a THUMP domain. Residues 183–184 (ML), 208–209 (HF), Arg265, Gly287, and Gln296 each bind ATP.

The protein belongs to the ThiI family.

The protein localises to the cytoplasm. It catalyses the reaction [ThiI sulfur-carrier protein]-S-sulfanyl-L-cysteine + a uridine in tRNA + 2 reduced [2Fe-2S]-[ferredoxin] + ATP + H(+) = [ThiI sulfur-carrier protein]-L-cysteine + a 4-thiouridine in tRNA + 2 oxidized [2Fe-2S]-[ferredoxin] + AMP + diphosphate. It carries out the reaction [ThiS sulfur-carrier protein]-C-terminal Gly-Gly-AMP + S-sulfanyl-L-cysteinyl-[cysteine desulfurase] + AH2 = [ThiS sulfur-carrier protein]-C-terminal-Gly-aminoethanethioate + L-cysteinyl-[cysteine desulfurase] + A + AMP + 2 H(+). It participates in cofactor biosynthesis; thiamine diphosphate biosynthesis. Its function is as follows. Catalyzes the ATP-dependent transfer of a sulfur to tRNA to produce 4-thiouridine in position 8 of tRNAs, which functions as a near-UV photosensor. Also catalyzes the transfer of sulfur to the sulfur carrier protein ThiS, forming ThiS-thiocarboxylate. This is a step in the synthesis of thiazole, in the thiamine biosynthesis pathway. The sulfur is donated as persulfide by IscS. In Streptococcus pyogenes serotype M6 (strain ATCC BAA-946 / MGAS10394), this protein is Probable tRNA sulfurtransferase.